The chain runs to 242 residues: Small ribosomal subunit protein uS2 (242 aa).

The protein belongs to the universal ribosomal protein uS2 family.

In Shewanella sediminis (strain HAW-EB3), this protein is Small ribosomal subunit protein uS2.